Here is a 294-residue protein sequence, read N- to C-terminus: Protoheme IX farnesyltransferase (294 aa).

9 helical membrane-spanning segments follow: residues 22-42 (VTQL…PDLP), 46-66 (IVIA…AINC), 89-109 (ITVP…MWVL), 116-136 (LTMW…TIIL), 143-163 (NIVI…AAVA), 170-190 (AWIL…ALAL), 211-231 (AFTQ…TMLP), 232-252 (FAVG…DVIF), and 272-292 (FTYS…DHYL).

It belongs to the UbiA prenyltransferase family. Protoheme IX farnesyltransferase subfamily.

It localises to the cell inner membrane. The catalysed reaction is heme b + (2E,6E)-farnesyl diphosphate + H2O = Fe(II)-heme o + diphosphate. The protein operates within porphyrin-containing compound metabolism; heme O biosynthesis; heme O from protoheme: step 1/1. Its function is as follows. Converts heme B (protoheme IX) to heme O by substitution of the vinyl group on carbon 2 of heme B porphyrin ring with a hydroxyethyl farnesyl side group. This chain is Protoheme IX farnesyltransferase, found in Herminiimonas arsenicoxydans.